The chain runs to 296 residues: Protoheme IX farnesyltransferase (296 aa).

Residues 1–9 (MMFKQYLQV) lie on the Cytoplasmic side of the membrane. Residues 10–28 (TKPGIIFGNLISVIGGFLL) form a helical membrane-spanning segment. Residues 29-37 (ASKGSIDYP) are Periplasmic-facing. Residues 38–56 (LFIYTLVGVSLVVASGCVF) form a helical membrane-spanning segment. Residues 57 to 78 (NNYIDRDIDRKMERTKNRVLVK) are Cytoplasmic-facing. The chain crosses the membrane as a helical span at residues 79–97 (GLISPAVSLVYATLLGIAG). Residues 98–107 (FMLLWFGANP) are Periplasmic-facing. A helical membrane pass occupies residues 108–126 (LACWLGVMGFVVYVGVYSL). Over 127 to 197 (YMKRHSVYGT…YQAANIPVLP (71 aa)) the chain is Cytoplasmic. Residues 198–216 (VVKGISVAKNHITLYIIAF) traverse the membrane as a helical segment. At 217–228 (AVATLMLSLGGY) the chain is on the periplasmic side. The chain crosses the membrane as a helical span at residues 229–247 (AGYKYLVVAAAVSVWWLGM). At 248 to 268 (ALRGYKVADDRIWARKLFGFS) the chain is on the cytoplasmic side. The helical transmembrane segment at 269–287 (IIAITALSVMMSVDFMVPD) threads the bilayer. Topologically, residues 288 to 296 (SHTLLAAVW) are periplasmic.

The protein belongs to the UbiA prenyltransferase family. Protoheme IX farnesyltransferase subfamily.

The protein resides in the cell inner membrane. It catalyses the reaction heme b + (2E,6E)-farnesyl diphosphate + H2O = Fe(II)-heme o + diphosphate. It functions in the pathway porphyrin-containing compound metabolism; heme O biosynthesis; heme O from protoheme: step 1/1. Functionally, converts heme B (protoheme IX) to heme O by substitution of the vinyl group on carbon 2 of heme B porphyrin ring with a hydroxyethyl farnesyl side group. This is Protoheme IX farnesyltransferase from Escherichia coli O139:H28 (strain E24377A / ETEC).